A 462-amino-acid chain; its full sequence is Dipeptidyl peptidase 1 (462 aa).

The N-terminal stretch at 1–24 (MGPWTHSLRAALLLVLLGVCTVSS) is a signal peptide. N-linked (GlcNAc...) asparagine glycosylation is found at N29 and N53. 2 cysteine pairs are disulfide-bonded: C30–C118 and C54–C136. A propeptide spanning residues 135–229 (ACFVGKKMAN…TDEIQQQILS (95 aa)) is cleaved from the precursor. A glycan (N-linked (GlcNAc...) asparagine) is linked at N144. 3 cysteine pairs are disulfide-bonded: C254–C297, C290–C330, and C320–C336. C257 is an active-site residue. An N-linked (GlcNAc...) asparagine glycan is attached at N275. The chloride site is built by F301 and Y303. Residue Y346 coordinates chloride. Catalysis depends on residues H404 and N426.

This sequence belongs to the peptidase C1 family. In terms of assembly, tetramer of heterotrimers consisting of exclusion domain, heavy- and light chains. Chloride is required as a cofactor. Broadly distributed, but higher levels found in liver, spleen, intestine, lung and kidney.

It localises to the lysosome. It carries out the reaction Release of an N-terminal dipeptide, Xaa-Yaa-|-Zaa-, except when Xaa is Arg or Lys, or Yaa or Zaa is Pro.. Its function is as follows. Thiol protease. Has dipeptidylpeptidase activity. Active against a broad range of dipeptide substrates composed of both polar and hydrophobic amino acids. Proline cannot occupy the P1 position and arginine cannot occupy the P2 position of the substrate. Can act as both an exopeptidase and endopeptidase. Activates serine proteases such as elastase, cathepsin G and granzymes A and B. The protein is Dipeptidyl peptidase 1 (Ctsc) of Rattus norvegicus (Rat).